The following is a 313-amino-acid chain: Ribosomal RNA small subunit methyltransferase H (313 aa).

S-adenosyl-L-methionine contacts are provided by residues 35 to 37 (GGH), aspartate 55, phenylalanine 79, aspartate 100, and glutamine 107.

Belongs to the methyltransferase superfamily. RsmH family.

It is found in the cytoplasm. It catalyses the reaction cytidine(1402) in 16S rRNA + S-adenosyl-L-methionine = N(4)-methylcytidine(1402) in 16S rRNA + S-adenosyl-L-homocysteine + H(+). Its function is as follows. Specifically methylates the N4 position of cytidine in position 1402 (C1402) of 16S rRNA. This chain is Ribosomal RNA small subunit methyltransferase H, found in Burkholderia multivorans (strain ATCC 17616 / 249).